A 166-amino-acid polypeptide reads, in one-letter code: Protein-export protein SecB (166 aa).

Belongs to the SecB family. Homotetramer, a dimer of dimers. One homotetramer interacts with 1 SecA dimer.

It is found in the cytoplasm. One of the proteins required for the normal export of preproteins out of the cell cytoplasm. It is a molecular chaperone that binds to a subset of precursor proteins, maintaining them in a translocation-competent state. It also specifically binds to its receptor SecA. This chain is Protein-export protein SecB, found in Actinobacillus pleuropneumoniae serotype 7 (strain AP76).